A 215-amino-acid chain; its full sequence is Putative ribosome biogenesis protein slx9-like (215 aa).

Disordered regions lie at residues 49–121 (IIPS…GLGM), 133–157 (DSMK…MSLK), and 189–215 (LQNQ…LKRK).

This sequence belongs to the SLX9 family.

It localises to the nucleus. Its subcellular location is the nucleolus. In terms of biological role, involved in ribosome biogenesis. This chain is Putative ribosome biogenesis protein slx9-like, found in Dictyostelium discoideum (Social amoeba).